Consider the following 121-residue polypeptide: ATP synthase epsilon chain (121 aa).

This sequence belongs to the ATPase epsilon chain family. In terms of assembly, F-type ATPases have 2 components, CF(1) - the catalytic core - and CF(0) - the membrane proton channel. CF(1) has five subunits: alpha(3), beta(3), gamma(1), delta(1), epsilon(1). CF(0) has three main subunits: a, b and c.

It localises to the cell membrane. In terms of biological role, produces ATP from ADP in the presence of a proton gradient across the membrane. In Mycolicibacterium vanbaalenii (strain DSM 7251 / JCM 13017 / BCRC 16820 / KCTC 9966 / NRRL B-24157 / PYR-1) (Mycobacterium vanbaalenii), this protein is ATP synthase epsilon chain.